We begin with the raw amino-acid sequence, 655 residues long: MVLYTTPFPNSCLSALHAVSWALIFPCYWLVDRLVASFIPTTYEKRQRADDPCYLQLFCTVLFTPVYLALLVAALPFAFLGFIFWSPLQSARRPYSYSRLEDKSPAGGAALLSEWKGTGAGKSFCFATANVCLLPDSLARLNNVFNTQARAKEIGQRIRNGAARPQIKIYIDSPTNTSISAASFSSLVSPQGSDGARAVPGSIKRTASVEYKGDGGRHPSDEAANGPASGEQADGSLEDSCIVRIGGEEGGRAQEADDPAPGSQARNGAGGTPKGQTPNHNQRDGDSGSLGSPSASRESLVKARAGQDSGGSGEPGSNSKLLYKTSVVKKAAARRRRHPDEAFDHEVSAFFPANLDFLCLQEVFDKRAAAKLKEQLHGYFEYILYDVGVYGCHGCCNFKCLNSGLFFASRYPVMDVAYHCYPNGCSFDALASKGALFLKVQVGSTPQDQRIVGYIACTHLHAPPEDSAIRCEQLDLLQDWLADFRKSTSSTSTANPEELVVFDVICGDLNFDNCSSDDKLEQQHSLFTRYKDPCRLGPGEEKPWAIGTLLDINGLYDEDVCTPDNLQKVLESEEGRREYLAFPTSKSPGAGQKGRKDLLKGNGRRIDYMLHAEEGLCPDWKAEVEEFSFITQLSGLTDHLPVAMRLMVSAGEEEA.

The Cytoplasmic segment spans residues 1–10 (MVLYTTPFPN). An intramembrane region (helical) is located at residues 11–31 (SCLSALHAVSWALIFPCYWLV). Over 32–64 (DRLVASFIPTTYEKRQRADDPCYLQLFCTVLFT) the chain is Cytoplasmic. 2 S-palmitoyl cysteine lipidation sites follow: Cys53 and Cys59. The helical intramembrane region spans 65 to 85 (PVYLALLVAALPFAFLGFIFW). Residues 86–655 (SPLQSARRPY…LMVSAGEEEA (570 aa)) are Cytoplasmic-facing. Ser178 is modified (phosphoserine). Disordered stretches follow at residues 209–237 (VEYKGDGGRHPSDEAANGPASGEQADGSL) and 250–320 (GGRA…SNSK). Basic and acidic residues predominate over residues 211–221 (YKGDGGRHPSD). Ser289 is modified (phosphoserine). Glu362 provides a ligand contact to Mg(2+). 2 S-palmitoyl cysteine lipidation sites follow: Cys395 and Cys396. His639 serves as the catalytic Proton acceptor.

This sequence belongs to the neutral sphingomyelinase family. Mg(2+) serves as cofactor. Palmitoylated, palmitoylation-deficient proteins are targeted for lysosomal degradation. In terms of tissue distribution, in brain sections, it is restricted to neurons and especially prominent in large cells, including Purkinje cells, pyramidal cells, neurons of the dentate gyrus granular layer, and neurons in the pontine nuclei. Also present in the hypothalamic nuclei, neurons in the piriform cortex, and nuclei of the brainstem (at protein level). Mainly expressed in brain and jejunum. Weakly or not expressed in heart, spleen, lung, liver, kidney and testis.

It localises to the golgi apparatus membrane. Its subcellular location is the cell membrane. It carries out the reaction a sphingomyelin + H2O = phosphocholine + an N-acylsphing-4-enine + H(+). The enzyme catalyses N-(15Z-tetracosenoyl)sphing-4-enine-1-phosphocholine + H2O = N-(15Z-tetracosenoyl)-sphing-4-enine + phosphocholine + H(+). The catalysed reaction is N-(tetracosanoyl)-sphing-4-enine-1-phosphocholine + H2O = N-tetracosanoyl-sphing-4-enine + phosphocholine + H(+). It catalyses the reaction an N-(acyl)-sphingosylphosphocholine + H2O = an N-acyl-sphingoid base + phosphocholine + H(+). It carries out the reaction 1-hexadecanoyl-sn-glycero-3-phosphocholine + H2O = 1-hexadecanoyl-sn-glycerol + phosphocholine + H(+). The enzyme catalyses 1-O-octadecyl-sn-glycero-3-phosphocholine + H2O = 1-O-octadecyl-sn-glycerol + phosphocholine + H(+). The catalysed reaction is a sphingosylphosphocholine + H2O = a sphingoid base + phosphocholine + H(+). It catalyses the reaction N-(hexadecanoyl)-sphing-4-enine-1-phosphocholine + H2O = N-hexadecanoylsphing-4-enine + phosphocholine + H(+). It participates in lipid metabolism; sphingolipid metabolism. Its activity is regulated as follows. Inhibited by nSMase inhibitor GW4869. Binding of anionic phospholipids (APLs) such as phosphatidylserine (PS) and phosphatidic acid (PA) increases enzymatic activity. Functionally, catalyzes the hydrolysis of sphingomyelin to form ceramide and phosphocholine. Ceramide mediates numerous cellular functions, such as apoptosis and growth arrest, and is capable of regulating these 2 cellular events independently. Also hydrolyzes sphingosylphosphocholine. Binds to anionic phospholipids (APLs) such as phosphatidylserine (PS) and phosphatidic acid (PA) that modulate enzymatic activity and subcellular location. Regulates the cell cycle by acting as a growth suppressor in confluent cells. Acts as a regulator of postnatal development and participates in bone and dentin mineralization. May be involved in IL-1-beta-induced JNK activation in hepatocytes. May act as a mediator in transcriptional regulation of NOS2/iNOS via the NF-kappa-B activation under inflammatory conditions. The protein is Sphingomyelin phosphodiesterase 3 of Rattus norvegicus (Rat).